A 1038-amino-acid polypeptide reads, in one-letter code: Zinc finger protein 628 (1038 aa).

A disordered region spans residues 1–31 (MAGSHVDMAPASTTEGTGEKPGPTAPAPTPA). A compositionally biased stretch (low complexity) spans 13 to 22 (TTEGTGEKPG). 6 C2H2-type zinc fingers span residues 34 to 56 (YECG…QRTH), 62 to 84 (YKCP…QRGH), 90 to 112 (YQCP…RSVH), 118 to 140 (FTCG…LRQH), 146 to 168 (YPCP…RHVH), and 174 to 196 (YTCG…QRVH). At Thr-197 the chain carries Phosphothreonine. The segment at 202-224 (FRCPLCPKTFTHSSNLLLHHRTH) adopts a C2H2-type 7 zinc-finger fold. Disordered regions lie at residues 220 to 242 (HHRT…ETSR) and 254 to 273 (LQPR…PPVV). Pro residues-rich tracts occupy residues 227–237 (APGPAPAPAPP) and 257–273 (RSPP…PPVV). 7 consecutive C2H2-type zinc fingers follow at residues 346–368 (FACL…QHSH), 376–398 (FRCG…QQCH), 446–468 (YKCA…LRDH), 474–496 (YQCG…QRVH), 502–524 (FTCG…LRLH), 530–552 (YACT…RHVH), and 558–580 (HSCS…QRVH). Thr-581 carries the post-translational modification Phosphothreonine. 2 consecutive C2H2-type zinc fingers follow at residues 586-608 (FRCP…QRTH) and 614-636 (FACP…LRTH). Disordered regions lie at residues 637-661 (TPAT…LAAA) and 717-763 (PSSV…AGQG). The span at 723–733 (PTPPPPPPPPK) shows a compositional bias: pro residues. Over residues 734 to 756 (VILLPPASAGGPGSGAARPGPRS) the composition is skewed to low complexity. 4 tandem repeats follow at residues 811 to 821 (VQLQPAQEVAT), 822 to 832 (VQLQPAQEVTT), 833 to 843 (VQLQPAQEVTT), and 844 to 854 (VQLQPLTGQVS). Residues 811–854 (VQLQPAQEVATVQLQPAQEVTTVQLQPAQEVTTVQLQPLTGQVS) are 4 X 11 AA tandem repeats of VQLQP-[AL]-[QT]-[EG]-[VQ]-[ATV]-[ST]. The interval 922 to 1038 (DGEQTRLCVQ…LPAVQLVHTF (117 aa)) is interaction with TAF4B.

Interacts with TAF4B. In terms of tissue distribution, expressed widely in testis, in both germline and somatic cells. Seems to have particularly strong expression in meiotic spermatocytes, postmeiotic round spermatids and Sertoli cells. Not detected in elongating spermatids or mature sperm (at protein level). Expressed in testis, ovary, spleen, lung, brain, liver and kidney. Expressed in D3 embryonic stem cells and F9 embryonal carcinoma cells.

The protein localises to the nucleus. In terms of biological role, transcriptional activator. Binds DNA on GT-box consensus sequence 5'-TTGGTT-3'. Plays a role in spermiogenesis. This chain is Zinc finger protein 628, found in Mus musculus (Mouse).